Here is a 488-residue protein sequence, read N- to C-terminus: Probable malate:quinone oxidoreductase (488 aa).

The protein belongs to the MQO family. FAD serves as cofactor.

The enzyme catalyses (S)-malate + a quinone = a quinol + oxaloacetate. Its pathway is carbohydrate metabolism; tricarboxylic acid cycle; oxaloacetate from (S)-malate (quinone route): step 1/1. This chain is Probable malate:quinone oxidoreductase, found in Neisseria meningitidis serogroup A / serotype 4A (strain DSM 15465 / Z2491).